Reading from the N-terminus, the 224-residue chain is MVQCLVVDDDPRILNYIASHLQTEHIDAFTQPSGEAALKLLEKQRVDIAVVDIMMDGMDGFQLCNTLKNDYDIPVIMLTARDALSDKERAFISGTDDYVTKPFEVKELIFRIRAVLRRYNINSNSEMTIGNLTLNQSYLELQVSNKTMTLPNKEFQLLFMLAARPKQIFTREQIIEKIWGYDYEGDERTVDVHIKRLRQRLKKLNATLTIETVRGQGYKVENHV.

Positions 3–116 (QCLVVDDDPR…ELIFRIRAVL (114 aa)) constitute a Response regulatory domain. The residue at position 52 (Asp52) is a 4-aspartylphosphate. A DNA-binding region (ompR/PhoB-type) is located at residues 124 to 222 (NSEMTIGNLT…VRGQGYKVEN (99 aa)).

In terms of processing, phosphorylated by HssS.

The protein localises to the cytoplasm. Functionally, member of the two-component regulatory system HssS/HssR involved in intracellular heme homeostasis and tempering of staphylococcal virulence. Phosphorylated HssR binds to a direct repeat sequence within hrtAB promoter and activates the expression of hrtAB, an efflux pump, in response to extracellular heme, hemin, hemoglobin or blood. The sequence is that of Heme response regulator HssR (hssR) from Staphylococcus aureus (strain MRSA252).